The primary structure comprises 173 residues: Inorganic pyrophosphatase (173 aa).

Residues Lys-28, Arg-42, and Tyr-54 each contribute to the substrate site. Mg(2+) is bound by residues Asp-64, Asp-69, and Asp-101. Tyr-140 is a binding site for substrate.

This sequence belongs to the PPase family. Homohexamer. The cofactor is Mg(2+).

The protein resides in the cytoplasm. It catalyses the reaction diphosphate + H2O = 2 phosphate + H(+). In terms of biological role, catalyzes the hydrolysis of inorganic pyrophosphate (PPi) forming two phosphate ions. The chain is Inorganic pyrophosphatase from Helicobacter pylori (strain ATCC 700392 / 26695) (Campylobacter pylori).